The sequence spans 219 residues: Probable transcription factor At1g55950 (219 aa).

Positions 9 to 77 (ASHSLKSLMA…DEKMETEEEG (69 aa)) are disordered. The span at 17-30 (MAKKNKRSQQKNKC) shows a compositional bias: basic residues. Positions 31 to 48 (LKPEKDPSTVKRLLEDPP) are enriched in basic and acidic residues. Acidic residues predominate over residues 65 to 77 (YGDDEKMETEEEG).

This sequence belongs to the GeBP family.

The sequence is that of Probable transcription factor At1g55950 from Arabidopsis thaliana (Mouse-ear cress).